The sequence spans 269 residues: Protein OPG079 (269 aa).

Belongs to the orthopoxvirus OPG079 family. Homoomultimer (Potential). Interacts with the small subunit of ribonucleotide reductase. Interacts with host FAM111A; this interaction protomtes OPG079 degradation through autophagy.

It localises to the host cytoplasm. Functionally, plays an essential role in viral DNA replication. Binds to ssDNA with high affinity and localizes to cytoplasmic factories where nascent viral genomes accumulate. May disrupt loops, hairpins and other secondary structures present on ssDNA to reduce and eliminate pausing of viral DNA polymerase at specific sites during elongation. In Vaccinia virus (strain Copenhagen) (VACV), this protein is Protein OPG079 (OPG079).